The chain runs to 365 residues: Embryonic developmental protein tofu-6 (365 aa).

In terms of domain architecture, RRM spans 13-90 (AGFHIRNVPK…YSLKVSDHKN (78 aa)).

Functionally, required maternally for early embryonic cell divisions. May have a role in DNA replication. The polypeptide is Embryonic developmental protein tofu-6 (Caenorhabditis briggsae).